A 440-amino-acid polypeptide reads, in one-letter code: P47(GAG-CRK) protein (440 aa).

The segment at 1 to 208 is gag first part; sequence MEAVIKVISS…TPRGAEQPRA (208 aa). Positions 174 to 177 match the PPXY motif motif; sequence PPPY. A disordered region spans residues 183–230; the sequence is YPSLAGVGEQQGQGGDTPRGAEQPRAGRGAGHRGLRRPAGRGQRVRPA. Positions 209–437 are CRK; the sequence is GRGAGHRGLR…PSSASVSTLT (229 aa). Positions 212–221 are enriched in basic residues; the sequence is AGHRGLRRPA. Residues 248-354 form the SH2 domain; the sequence is WYWGRLSRGD…LDTTTLIEPV (107 aa). Positions 368–428 constitute an SH3 domain; it reads EEVEYVRALF…PVPYVEKCRP (61 aa). The interval 438–440 is gag second part; sequence GGR.

This is P47(GAG-CRK) protein from Avian sarcoma virus CT10 (Avian sarcoma virus (strain CT10)).